The sequence spans 494 residues: PTS system cellobiose-specific EIIC component (494 aa).

The 474-residue stretch at 8-481 folds into the PTS EIIC type-3 domain; that stretch reads MEKYLVPVAA…IITFVIWVPF (474 aa). The next 9 helical transmembrane spans lie at 32–52, 92–112, 119–139, 188–208, 227–247, 274–294, 355–375, 406–426, and 463–483; these read FIGMLPATLAGALAAMISAIV, ISALVNQGTLTVIGLIFAFSW, AYGVNDLAGGIVSLATLFAGL, AYFTVIIMGALAVIIYAKLML, FLAIIPTIAALYIVGLIYYII, IFSVLIVTLFVSVFWFFGLHG, AFAWFGGSGGTITLVIAIILF, VVLNAIFFIPFAVAPLISVII, and AIVLTIINLIITFVIWVPFVI.

It is found in the cell membrane. Functionally, the phosphoenolpyruvate-dependent sugar phosphotransferase system (PTS), a major carbohydrate active transport system, catalyzes the phosphorylation of incoming sugar substrates concomitant with their translocation across the cell membrane. Involved in cellobiose transport with PtcA and PtcB. This system can also transport lactose. In Lactococcus lactis subsp. lactis (strain IL1403) (Streptococcus lactis), this protein is PTS system cellobiose-specific EIIC component.